A 344-amino-acid chain; its full sequence is Methionine import ATP-binding protein MetN (344 aa).

The ABC transporter domain occupies 2-241; it reads IEIKSVNKVF…PKTELAHQFI (240 aa). 38-45 is a binding site for ATP; that stretch reads GSSGAGKS.

This sequence belongs to the ABC transporter superfamily. Methionine importer (TC 3.A.1.24) family. The complex is composed of two ATP-binding proteins (MetN), two transmembrane proteins (MetI) and a solute-binding protein (MetQ).

It is found in the cell inner membrane. The catalysed reaction is L-methionine(out) + ATP + H2O = L-methionine(in) + ADP + phosphate + H(+). The enzyme catalyses D-methionine(out) + ATP + H2O = D-methionine(in) + ADP + phosphate + H(+). Its function is as follows. Part of the ABC transporter complex MetNIQ involved in methionine import. Responsible for energy coupling to the transport system. This is Methionine import ATP-binding protein MetN from Vibrio cholerae serotype O1 (strain ATCC 39315 / El Tor Inaba N16961).